Reading from the N-terminus, the 243-residue chain is Protein GrpE (243 aa).

The protein belongs to the GrpE family. In terms of assembly, homodimer.

It is found in the cytoplasm. In terms of biological role, participates actively in the response to hyperosmotic and heat shock by preventing the aggregation of stress-denatured proteins, in association with DnaK and GrpE. It is the nucleotide exchange factor for DnaK and may function as a thermosensor. Unfolded proteins bind initially to DnaJ; upon interaction with the DnaJ-bound protein, DnaK hydrolyzes its bound ATP, resulting in the formation of a stable complex. GrpE releases ADP from DnaK; ATP binding to DnaK triggers the release of the substrate protein, thus completing the reaction cycle. Several rounds of ATP-dependent interactions between DnaJ, DnaK and GrpE are required for fully efficient folding. The chain is Protein GrpE from Mycoplasma mobile (strain ATCC 43663 / 163K / NCTC 11711) (Mesomycoplasma mobile).